The primary structure comprises 340 residues: Formimidoylglutamase (340 aa).

Mn(2+) contacts are provided by His129, Asp160, His162, Asp164, Asp257, and Asp259.

It belongs to the arginase family. It depends on Mn(2+) as a cofactor.

The catalysed reaction is N-formimidoyl-L-glutamate + H2O = formamide + L-glutamate. It functions in the pathway amino-acid degradation; L-histidine degradation into L-glutamate; L-glutamate from N-formimidoyl-L-glutamate (hydrolase route): step 1/1. Its function is as follows. Catalyzes the conversion of N-formimidoyl-L-glutamate to L-glutamate and formamide. This is Formimidoylglutamase from Vibrio parahaemolyticus serotype O3:K6 (strain RIMD 2210633).